Consider the following 484-residue polypeptide: Trigger factor (484 aa).

The region spanning 162 to 243 (GDFISIDLSA…VKSVKERELP (82 aa)) is the PPIase FKBP-type domain. The interval 427-484 (DGNTIDTSEFFGKPPENDVTDLLDDDADGDAGVDADGDTENSAEPADADSADAAQGAG) is disordered. Over residues 444 to 476 (DVTDLLDDDADGDAGVDADGDTENSAEPADADS) the composition is skewed to acidic residues.

It belongs to the FKBP-type PPIase family. Tig subfamily.

It is found in the cytoplasm. It carries out the reaction [protein]-peptidylproline (omega=180) = [protein]-peptidylproline (omega=0). Functionally, involved in protein export. Acts as a chaperone by maintaining the newly synthesized protein in an open conformation. Functions as a peptidyl-prolyl cis-trans isomerase. The chain is Trigger factor from Mycobacterium marinum (strain ATCC BAA-535 / M).